Here is a 322-residue protein sequence, read N- to C-terminus: Ubiquitin-conjugating enzyme E2 U (322 aa).

One can recognise a UBC core domain in the interval 4–153 (RAYLLLQRDF…LKLFNRPLQM (150 aa)). Residue Cys89 is the Glycyl thioester intermediate of the active site.

It belongs to the ubiquitin-conjugating enzyme family. Post-translationally, autoubiquitinated in vitro in the presence of UBR5.

It catalyses the reaction S-ubiquitinyl-[E1 ubiquitin-activating enzyme]-L-cysteine + [E2 ubiquitin-conjugating enzyme]-L-cysteine = [E1 ubiquitin-activating enzyme]-L-cysteine + S-ubiquitinyl-[E2 ubiquitin-conjugating enzyme]-L-cysteine.. Its pathway is protein modification; protein ubiquitination. Its function is as follows. Catalyzes the covalent attachment of ubiquitin to other proteins. The sequence is that of Ubiquitin-conjugating enzyme E2 U (UBE2U) from Macaca fascicularis (Crab-eating macaque).